Consider the following 157-residue polypeptide: Tuberoinfundibular peptide of 39 residues (157 aa).

An N-terminal signal peptide occupies residues 1-25; sequence MALSLPPRPALLFLVLMSVTLMASA. The propeptide occupies 26 to 116; it reads FPQPQLRPLQ…DWPSRVGHQQ (91 aa).

Belongs to the parathyroid hormone family.

The protein resides in the secreted. Its function is as follows. Plays a role as a potent and selective agonist of pth2r resulting in adenyl cyclase activation and intracellular calcium level elevation. This is Tuberoinfundibular peptide of 39 residues from Danio rerio (Zebrafish).